Reading from the N-terminus, the 436-residue chain is Trigger factor (436 aa).

The 88-residue stretch at 161–248 folds into the PPIase FKBP-type domain; it reads TDRVTIDLYG…LKKVEQYRLP (88 aa).

Belongs to the FKBP-type PPIase family. Tig subfamily.

It localises to the cytoplasm. It catalyses the reaction [protein]-peptidylproline (omega=180) = [protein]-peptidylproline (omega=0). Its function is as follows. Involved in protein export. Acts as a chaperone by maintaining the newly synthesized protein in an open conformation. Functions as a peptidyl-prolyl cis-trans isomerase. This is Trigger factor from Baumannia cicadellinicola subsp. Homalodisca coagulata.